The chain runs to 106 residues: Minor capsid protein VP2 (106 aa).

Belongs to the vesivirus VP2 protein family. In terms of assembly, homooligomer. The portal-like structure consists in 12 copies of VP2. Interacts with capsid protein VP1.

It localises to the virion. Its subcellular location is the host cytoplasm. Functionally, minor structural protein that forms a portal-like structure at a unique three-fold axis of symmetry, following binding to the host receptor. The virion attaches to feline junctional adhesion molecule A (F11R). Once attached, the virion is endocytosed. Acidification of the endosome induces conformational change of capsid protein thereby injecting virus genomic RNA into host cytoplasm. The channel formed by VP2 may allow the delivery of the viral genome through the host endosomal membrane. This Feline calicivirus (strain Japanese F4) (FCV) protein is Minor capsid protein VP2.